A 152-amino-acid polypeptide reads, in one-letter code: Nucleoside diphosphate kinase A (152 aa).

Positions 12, 60, 88, and 94 each coordinate ATP. Residue lysine 100 forms a Glycyl lysine isopeptide (Lys-Gly) (interchain with G-Cter in ubiquitin) linkage. Residues arginine 105 and asparagine 115 each coordinate ATP. Histidine 118 acts as the Pros-phosphohistidine intermediate in catalysis. A phosphoserine mark is found at serine 120 and serine 122. The residue at position 124 (lysine 124) is an N6-acetyllysine. Position 125 is a phosphoserine (serine 125).

Belongs to the NDK family. Hexamer of two different chains: An and B (A6, A5B, A4B2, A3B3, A2B4, AB5, B6). Interacts with PRUNE1. Component of the SET complex, composed of at least ANP32A, APEX1, HMGB2, NME1, SET and TREX1. Within this complex, interacts directly with SET. Also interacts with TREX1, but only following translocation to the nucleus. Requires Mg(2+) as cofactor.

It localises to the cytoplasm. The protein localises to the nucleus. It catalyses the reaction a 2'-deoxyribonucleoside 5'-diphosphate + ATP = a 2'-deoxyribonucleoside 5'-triphosphate + ADP. The catalysed reaction is a ribonucleoside 5'-diphosphate + ATP = a ribonucleoside 5'-triphosphate + ADP. With respect to regulation, autophosphorylation at His-118 increases serine/threonine protein kinase activity of the enzyme. Interaction with the SET complex inhibits exonuclease activity. In terms of biological role, major role in the synthesis of nucleoside triphosphates other than ATP. The ATP gamma phosphate is transferred to the NDP beta phosphate via a ping-pong mechanism, using a phosphorylated active-site intermediate. Possesses nucleoside-diphosphate kinase, serine/threonine-specific protein kinase, geranyl and farnesyl pyrophosphate kinase, histidine protein kinase and 3'-5' exonuclease activities. Involved in cell proliferation, differentiation and development, signal transduction, G protein-coupled receptor endocytosis, and gene expression. Required for neural development including neural patterning and cell fate determination. During GZMA-mediated cell death, works in concert with TREX1. NME1 nicks one strand of DNA and TREX1 removes bases from the free 3' end to enhance DNA damage and prevent DNA end reannealing and rapid repair. This Mus musculus (Mouse) protein is Nucleoside diphosphate kinase A (Nme1).